Here is a 427-residue protein sequence, read N- to C-terminus: Diaminobutyrate--2-oxoglutarate transaminase (427 aa).

An N6-(pyridoxal phosphate)lysine modification is found at K269.

Belongs to the class-III pyridoxal-phosphate-dependent aminotransferase family. The cofactor is pyridoxal 5'-phosphate.

The catalysed reaction is L-2,4-diaminobutanoate + 2-oxoglutarate = L-aspartate 4-semialdehyde + L-glutamate. The protein operates within amine and polyamine biosynthesis; ectoine biosynthesis; L-ectoine from L-aspartate 4-semialdehyde: step 1/3. Its function is as follows. Catalyzes reversively the conversion of L-aspartate beta-semialdehyde (ASA) to L-2,4-diaminobutyrate (DABA) by transamination with L-glutamate. This Halalkalibacterium halodurans (strain ATCC BAA-125 / DSM 18197 / FERM 7344 / JCM 9153 / C-125) (Bacillus halodurans) protein is Diaminobutyrate--2-oxoglutarate transaminase (ectB).